A 714-amino-acid chain; its full sequence is Glycine--tRNA ligase beta subunit (714 aa).

The protein belongs to the class-II aminoacyl-tRNA synthetase family. Tetramer of two alpha and two beta subunits.

The protein localises to the cytoplasm. It catalyses the reaction tRNA(Gly) + glycine + ATP = glycyl-tRNA(Gly) + AMP + diphosphate. The protein is Glycine--tRNA ligase beta subunit of Rhodospirillum centenum (strain ATCC 51521 / SW).